A 511-amino-acid polypeptide reads, in one-letter code: Signal transduction histidine-protein kinase/phosphatase MprB (511 aa).

Residues 1–26 lie on the Cytoplasmic side of the membrane; the sequence is MVGFRRGPRAPLRATSSLSLRWRVML. A helical membrane pass occupies residues 27–47; sequence LAMSMVAMVVVLMSFAVYAVI. The Extracellular portion of the chain corresponds to 48 to 163; it reads SAALYSDIDN…PTEAVMTKLR (116 aa). The helical transmembrane segment at 164 to 184 threads the bilayer; it reads AVLLIVGGVGVAVAAVAGGMV. The Cytoplasmic portion of the chain corresponds to 185–511; the sequence is TRAGLRPVGR…SVDSQSARAR (327 aa). The HAMP domain maps to 186–238; sequence RAGLRPVGRLTEAAERVARTDDLRPIPVFGSDELARLTEAFNLMLRALAESRE. Residues 246–466 form the Histidine kinase domain; sequence DAGHELRTPL…AICMLLPGRP (221 aa). Residue histidine 249 is modified to Phosphohistidine; by autocatalysis. A disordered region spans residues 468-511; sequence PDSAYPAAPDDKKTEPVDTRGANGANSRGSANVISVDSQSARAR. The segment covering 476 to 485 has biased composition (basic and acidic residues); the sequence is PDDKKTEPVD. A compositionally biased stretch (polar residues) spans 491–511; the sequence is GANSRGSANVISVDSQSARAR.

Mg(2+) is required as a cofactor. It depends on Mn(2+) as a cofactor. Post-translationally, autophosphorylated.

It localises to the cell membrane. The catalysed reaction is ATP + protein L-histidine = ADP + protein N-phospho-L-histidine.. Functionally, member of the two-component regulatory system MprB/MprA which contributes to maintaining a balance among several systems involved in stress resistance and is required for establishment and maintenance of persistent infection in the host. In response to environmental signals MprB acts both as a membrane-associated protein kinase that undergoes autophosphorylation and subsequently transfers the phosphate to MprA, and a protein phosphatase that dephosphorylates phospho-MprA. This is Signal transduction histidine-protein kinase/phosphatase MprB (mprB) from Mycobacterium ulcerans (strain Agy99).